Here is a 120-residue protein sequence, read N- to C-terminus: Ribosome-binding factor A (120 aa).

It belongs to the RbfA family. As to quaternary structure, monomer. Binds 30S ribosomal subunits, but not 50S ribosomal subunits or 70S ribosomes.

It localises to the cytoplasm. In terms of biological role, one of several proteins that assist in the late maturation steps of the functional core of the 30S ribosomal subunit. Associates with free 30S ribosomal subunits (but not with 30S subunits that are part of 70S ribosomes or polysomes). Required for efficient processing of 16S rRNA. May interact with the 5'-terminal helix region of 16S rRNA. This is Ribosome-binding factor A from Borrelia garinii subsp. bavariensis (strain ATCC BAA-2496 / DSM 23469 / PBi) (Borreliella bavariensis).